The sequence spans 449 residues: Serine--tRNA ligase (449 aa).

Thr256 to Glu258 contributes to the L-serine binding site. Arg287 to Glu289 contributes to the ATP binding site. Glu310 is a binding site for L-serine. Position 374-377 (Glu374–Ser377) interacts with ATP. Residue Ser410 participates in L-serine binding.

This sequence belongs to the class-II aminoacyl-tRNA synthetase family. Type-1 seryl-tRNA synthetase subfamily. As to quaternary structure, homodimer. The tRNA molecule binds across the dimer.

Its subcellular location is the cytoplasm. It carries out the reaction tRNA(Ser) + L-serine + ATP = L-seryl-tRNA(Ser) + AMP + diphosphate + H(+). It catalyses the reaction tRNA(Sec) + L-serine + ATP = L-seryl-tRNA(Sec) + AMP + diphosphate + H(+). Its pathway is aminoacyl-tRNA biosynthesis; selenocysteinyl-tRNA(Sec) biosynthesis; L-seryl-tRNA(Sec) from L-serine and tRNA(Sec): step 1/1. Catalyzes the attachment of serine to tRNA(Ser). Is also able to aminoacylate tRNA(Sec) with serine, to form the misacylated tRNA L-seryl-tRNA(Sec), which will be further converted into selenocysteinyl-tRNA(Sec). This Xanthomonas oryzae pv. oryzae (strain MAFF 311018) protein is Serine--tRNA ligase.